The sequence spans 637 residues: Anthranilate synthase, phenazine specific (637 aa).

Residues Met1–Ser434 form an anthranilate synthase component I region. The Glutamine amidotransferase type-1 domain maps to Gln437–Val628. Catalysis depends on for GATase activity residues Cys517, His602, and Glu604.

The catalysed reaction is chorismate + L-glutamine = anthranilate + pyruvate + L-glutamate + H(+). It functions in the pathway antibiotic biosynthesis; phenazine biosynthesis. Involved in the biosynthesis of the antibiotic, phenazine, a nitrogen-containing heterocyclic molecule having important roles in virulence, competition and biological control. The protein is Anthranilate synthase, phenazine specific (phzB) of Pseudomonas chlororaphis (Pseudomonas aureofaciens).